Consider the following 391-residue polypeptide: DNA-directed RNA polymerase subunit Rpo1C (391 aa).

It belongs to the RNA polymerase beta' chain family. As to quaternary structure, part of the RNA polymerase complex.

It is found in the cytoplasm. The catalysed reaction is RNA(n) + a ribonucleoside 5'-triphosphate = RNA(n+1) + diphosphate. Its function is as follows. DNA-dependent RNA polymerase (RNAP) catalyzes the transcription of DNA into RNA using the four ribonucleoside triphosphates as substrates. Forms part of the jaw domain. The protein is DNA-directed RNA polymerase subunit Rpo1C of Thermococcus gammatolerans (strain DSM 15229 / JCM 11827 / EJ3).